The sequence spans 196 residues: MADS-box transcription factor 32 (196 aa).

Positions 1-61 (MGRGRSEIKR…GKLYHFLSPT (61 aa)) constitute an MADS-box domain. Positions 85 to 175 (RQERRAELEK…CDKIAHAQTL (91 aa)) constitute a K-box domain.

It localises to the nucleus. In terms of biological role, probable transcription factor. This chain is MADS-box transcription factor 32 (MADS32), found in Oryza sativa subsp. japonica (Rice).